The primary structure comprises 240 residues: MADS-box transcription factor 27 (240 aa).

The MADS-box domain maps to 1-61; the sequence is MGRGKIVIRR…GRLYEYSSTS (61 aa). The K-box domain maps to 86-176; the sequence is LKFWQREAAS…YKKISLIRQE (91 aa). Positions 220–231 are enriched in polar residues; that stretch reads LPQHSDAEQSTA. Residues 220-240 are disordered; it reads LPQHSDAEQSTAPKLGLQLNP.

In terms of tissue distribution, ubiquitous.

It localises to the nucleus. In terms of biological role, probable transcription factor. This is MADS-box transcription factor 27 (MADS27) from Oryza sativa subsp. japonica (Rice).